Consider the following 90-residue polypeptide: Sec-independent protein translocase protein TatA (90 aa).

The helical transmembrane segment at 1-21 (MGGASIWHWIVVGVIVMLLFG) threads the bilayer. The segment at 42-90 (GMADEDQPQAPVANQSPPPVSATEPVRTLPPHQGEPAPAANASVDRKVG) is disordered.

This sequence belongs to the TatA/E family. In terms of assembly, the Tat system comprises two distinct complexes: a TatABC complex, containing multiple copies of TatA, TatB and TatC subunits, and a separate TatA complex, containing only TatA subunits. Substrates initially bind to the TatABC complex, which probably triggers association of the separate TatA complex to form the active translocon.

It is found in the cell inner membrane. In terms of biological role, part of the twin-arginine translocation (Tat) system that transports large folded proteins containing a characteristic twin-arginine motif in their signal peptide across membranes. TatA could form the protein-conducting channel of the Tat system. This Methylobacterium nodulans (strain LMG 21967 / CNCM I-2342 / ORS 2060) protein is Sec-independent protein translocase protein TatA.